The sequence spans 353 residues: Ferrochelatase (353 aa).

2 residues coordinate Fe cation: His223 and Glu304.

The protein belongs to the ferrochelatase family.

It is found in the cytoplasm. It carries out the reaction heme b + 2 H(+) = protoporphyrin IX + Fe(2+). The protein operates within porphyrin-containing compound metabolism; protoheme biosynthesis; protoheme from protoporphyrin-IX: step 1/1. Catalyzes the ferrous insertion into protoporphyrin IX. This Mesorhizobium japonicum (strain LMG 29417 / CECT 9101 / MAFF 303099) (Mesorhizobium loti (strain MAFF 303099)) protein is Ferrochelatase.